A 401-amino-acid polypeptide reads, in one-letter code: Hemorrhagic metalloproteinase-disintegrin-like kaouthiagin (401 aa).

In terms of domain architecture, Peptidase M12B spans 14–208 (KYIEFYVIVD…DRPQCILNKP (195 aa)). Residues E17 and D101 each coordinate Ca(2+). N-linked (GlcNAc...) asparagine glycosylation is present at N112. 3 disulfide bridges follow: C125-C203, C164-C187, and C166-C171. Residue H149 participates in Zn(2+) binding. Residue E150 is part of the active site. Zn(2+) contacts are provided by H153 and H159. C203, N206, I218, N221, F223, E225, E228, and D231 together coordinate Ca(2+). The Disintegrin domain occupies 216–285 (PAICGNYFVE…ECPTDSLQRN (70 aa)). Cystine bridges form between C219/C248, C230/C243, C232/C238, C257/C277, C264/C296, C289/C301, C308/C358, C323/C366, C336/C346, C353/C389, and C383/C394. The D/ECD-tripeptide signature appears at 263-265 (DCD). Ca(2+)-binding residues include D265, L266, E268, and D280.

Belongs to the venom metalloproteinase (M12B) family. P-III subfamily. P-IIIa sub-subfamily. As to quaternary structure, monomer. Zn(2+) is required as a cofactor. Expressed by the venom gland.

The protein localises to the secreted. Its function is as follows. Snake venom zinc protease that inhibits hemostasis by binding and cleaving the vWF in humans. Also has and inhibitory effect on the collagen-induced platelet aggregation. The chain is Hemorrhagic metalloproteinase-disintegrin-like kaouthiagin from Naja kaouthia (Monocled cobra).